The chain runs to 88 residues: Small ribosomal subunit protein bS20 (88 aa).

This sequence belongs to the bacterial ribosomal protein bS20 family.

In terms of biological role, binds directly to 16S ribosomal RNA. This Rhodopseudomonas palustris (strain BisA53) protein is Small ribosomal subunit protein bS20.